The following is a 220-amino-acid chain: Vesicle-associated protein 2-1 (220 aa).

Met1 carries the N-acetylmethionine modification. Topologically, residues 1–196 are cytoplasmic; the sequence is MTGVGENQLI…RNSGNGLSLK (196 aa). Thr2 is modified (N-acetylthreonine; in Vesicle-associated protein 2-1, N-terminally processed). Positions 9-129 constitute an MSP domain; sequence LISIQPDELK…TECKLKVSYI (121 aa). The disordered stretch occupies residues 133-154; it reads TTQRSSESGATNGDGQSSETIS. A coiled-coil region spans residues 153 to 188; it reads ISTIQRLKEERDAAVKQTQQLQHELETVRRRRNQRN. The chain crosses the membrane as a helical; Anchor for type IV membrane protein span at residues 197-217; sequence LAAMVGLIGLIIGFILKLTLA.

The protein belongs to the VAMP-associated protein (VAP) (TC 9.B.17) family.

Its subcellular location is the endoplasmic reticulum membrane. May play a role in vesicle trafficking. In Arabidopsis thaliana (Mouse-ear cress), this protein is Vesicle-associated protein 2-1 (PVA21).